The following is a 491-amino-acid chain: NADH-quinone oxidoreductase subunit N (491 aa).

The next 14 helical transmembrane spans lie at 6–26 (TLAP…INWI), 37–57 (VAYP…GMNA), 69–89 (LVVI…GLFV), 103–123 (MFAG…IVMI), 128–148 (FLTL…LVAL), 163–183 (FVLG…MYGA), 206–226 (LAFG…AAPF), 238–258 (PTAV…ALFI), 273–293 (QMML…TAIV), 301–321 (LAYS…SGVV), 335–355 (AMFY…IILL), 379–399 (FAFL…TVGF), 413–433 (GMTW…FYYL), and 458–478 (SMLS…AALM).

The protein belongs to the complex I subunit 2 family. In terms of assembly, NDH-1 is composed of 14 different subunits. Subunits NuoA, H, J, K, L, M, N constitute the membrane sector of the complex.

Its subcellular location is the cell inner membrane. The catalysed reaction is a quinone + NADH + 5 H(+)(in) = a quinol + NAD(+) + 4 H(+)(out). Its function is as follows. NDH-1 shuttles electrons from NADH, via FMN and iron-sulfur (Fe-S) centers, to quinones in the respiratory chain. The immediate electron acceptor for the enzyme in this species is believed to be ubiquinone. Couples the redox reaction to proton translocation (for every two electrons transferred, four hydrogen ions are translocated across the cytoplasmic membrane), and thus conserves the redox energy in a proton gradient. In Cupriavidus taiwanensis (strain DSM 17343 / BCRC 17206 / CCUG 44338 / CIP 107171 / LMG 19424 / R1) (Ralstonia taiwanensis (strain LMG 19424)), this protein is NADH-quinone oxidoreductase subunit N.